A 1380-amino-acid polypeptide reads, in one-letter code: Tripeptidyl-peptidase 2 (1380 aa).

The region spanning 110-619 (STFIASLMPK…QGLMQVDKAY (510 aa)) is the Peptidase S8 domain. Catalysis depends on charge relay system residues Asp145, His372, and Ser558. The segment at 1099-1143 (DEKEGKNPKDNPVSYPISYVVPPNKPEEDKKAASAPTCSKSVSER) is disordered. Residues 1110–1120 (PVSYPISYVVP) show a composition bias toward low complexity. Coiled-coil stretches lie at residues 1152-1181 (KIKF…KSEY) and 1238-1300 (EDDE…ELTK).

The protein belongs to the peptidase S8 family. In terms of assembly, assembles into a large oligomeric complex containing two related proteins 153 and 142 kDa that are derived from the single TPP2 gene. The 142 kDa form mainly differs from the 153 kDa form by a truncation at the C-terminal end.

It carries out the reaction Release of an N-terminal tripeptide from a polypeptide.. Its activity is regulated as follows. Inhibited by alanine-alanine-phenylalanine-chloromethylketone, butabindide and phenylmethanesulfonyl fluoride (PMSF), but not by leupeptin, N-ethylmaleimide, EDTA, MG132 and lactacystin. In terms of biological role, serine protease of the proteasome pathway that may function with the 20S proteasome to degrade oxidized proteins generated by environmental stress. The protein is Tripeptidyl-peptidase 2 (TPP2) of Arabidopsis thaliana (Mouse-ear cress).